Here is a 367-residue protein sequence, read N- to C-terminus: Protein-glutamate methylesterase/protein-glutamine glutaminase (367 aa).

The 118-residue stretch at 6–123 (RVLVVDDSAF…SLGIKQLADE (118 aa)) folds into the Response regulatory domain. The residue at position 57 (aspartate 57) is a 4-aspartylphosphate. The CheB-type methylesterase domain occupies 165 to 361 (ISKKEIVVVI…DILLKKVNEY (197 aa)). Residues serine 177, histidine 204, and aspartate 303 contribute to the active site.

It belongs to the CheB family. Phosphorylated by CheA. Phosphorylation of the N-terminal regulatory domain activates the methylesterase activity.

The protein resides in the cytoplasm. It catalyses the reaction [protein]-L-glutamate 5-O-methyl ester + H2O = L-glutamyl-[protein] + methanol + H(+). The catalysed reaction is L-glutaminyl-[protein] + H2O = L-glutamyl-[protein] + NH4(+). Functionally, involved in chemotaxis. Part of a chemotaxis signal transduction system that modulates chemotaxis in response to various stimuli. Catalyzes the demethylation of specific methylglutamate residues introduced into the chemoreceptors (methyl-accepting chemotaxis proteins or MCP) by CheR. Also mediates the irreversible deamidation of specific glutamine residues to glutamic acid. In Caldanaerobacter subterraneus subsp. tengcongensis (strain DSM 15242 / JCM 11007 / NBRC 100824 / MB4) (Thermoanaerobacter tengcongensis), this protein is Protein-glutamate methylesterase/protein-glutamine glutaminase.